The primary structure comprises 181 residues: Large ribosomal subunit protein uL5 (181 aa).

It belongs to the universal ribosomal protein uL5 family. Part of the 50S ribosomal subunit; part of the 5S rRNA/L5/L18/L25 subcomplex. Contacts the 5S rRNA and the P site tRNA. Forms a bridge to the 30S subunit in the 70S ribosome.

In terms of biological role, this is one of the proteins that bind and probably mediate the attachment of the 5S RNA into the large ribosomal subunit, where it forms part of the central protuberance. In the 70S ribosome it contacts protein S13 of the 30S subunit (bridge B1b), connecting the 2 subunits; this bridge is implicated in subunit movement. Contacts the P site tRNA; the 5S rRNA and some of its associated proteins might help stabilize positioning of ribosome-bound tRNAs. This Trichodesmium erythraeum (strain IMS101) protein is Large ribosomal subunit protein uL5.